Here is a 517-residue protein sequence, read N- to C-terminus: Nuclear transcription factor Y subunit alpha (517 aa).

The span at 1–11 (MNQINYLTSER) shows a compositional bias: polar residues. 4 disordered regions span residues 1–95 (MNQI…MDIH), 121–183 (RIDY…NFNY), 252–281 (ESEN…RGCG), and 304–517 (AAAN…NNRS). 2 stretches are compositionally biased toward low complexity: residues 26 to 81 (NNSS…SSSS) and 126 to 183 (NNNN…NFNY). The short motif at 232–255 (YVNAKQYNRILKRRAARAKLESEN) is the Subunit association domain (SAD) element. Positions 262–287 (KAYQHESRHQHAIRRQRGCGGRFLTK) form a DNA-binding region, NFYA/HAP2-type. Low complexity predominate over residues 304–345 (AAANPNASSTSTTTSNITNNNNNNNNNNNTNNNNNNNNTNVN). The span at 359–371 (SDDDIENDVENDS) shows a compositional bias: acidic residues. Low complexity-rich tracts occupy residues 377 to 388 (KNNSNSPNQSSS) and 408 to 423 (NNNI…NNNN). A compositionally biased stretch (polar residues) spans 438–447 (PLLNNGHIQA). Low complexity predominate over residues 448–517 (QQNQSPSSSP…PLSNFSNNRS (70 aa)).

This sequence belongs to the NFYA/HAP2 subunit family. Heterotrimeric transcription factor composed of three components, nfyA, nfyB and nfyC. nfyB and nfyC must interact and dimerize for nfyA association and DNA binding.

It localises to the nucleus. In terms of biological role, component of the NF-Y/HAP transcription factor complex. The NF-Y complex stimulates the transcription of various genes by recognizing and binding to a CCAAT motif in promoters. This chain is Nuclear transcription factor Y subunit alpha (nfyA), found in Dictyostelium discoideum (Social amoeba).